A 355-amino-acid chain; its full sequence is Probable dual-specificity RNA methyltransferase RlmN (355 aa).

The active-site Proton acceptor is the glutamate 107. The 229-residue stretch at 113–341 (TDKRLTVCVS…VSVRYSRGLE (229 aa)) folds into the Radical SAM core domain. Residues cysteine 120 and cysteine 346 are joined by a disulfide bond. [4Fe-4S] cluster-binding residues include cysteine 127, cysteine 131, and cysteine 134. S-adenosyl-L-methionine contacts are provided by residues 174–175 (GE), serine 204, 227–229 (SLH), and asparagine 303. Cysteine 346 (S-methylcysteine intermediate) is an active-site residue.

The protein belongs to the radical SAM superfamily. RlmN family. The cofactor is [4Fe-4S] cluster.

It is found in the cytoplasm. The catalysed reaction is adenosine(2503) in 23S rRNA + 2 reduced [2Fe-2S]-[ferredoxin] + 2 S-adenosyl-L-methionine = 2-methyladenosine(2503) in 23S rRNA + 5'-deoxyadenosine + L-methionine + 2 oxidized [2Fe-2S]-[ferredoxin] + S-adenosyl-L-homocysteine. It catalyses the reaction adenosine(37) in tRNA + 2 reduced [2Fe-2S]-[ferredoxin] + 2 S-adenosyl-L-methionine = 2-methyladenosine(37) in tRNA + 5'-deoxyadenosine + L-methionine + 2 oxidized [2Fe-2S]-[ferredoxin] + S-adenosyl-L-homocysteine. Specifically methylates position 2 of adenine 2503 in 23S rRNA and position 2 of adenine 37 in tRNAs. This Trichormus variabilis (strain ATCC 29413 / PCC 7937) (Anabaena variabilis) protein is Probable dual-specificity RNA methyltransferase RlmN.